Here is a 228-residue protein sequence, read N- to C-terminus: Adapter protein MecA (228 aa).

This sequence belongs to the MecA family. As to quaternary structure, homodimer.

Its function is as follows. Enables the recognition and targeting of unfolded and aggregated proteins to the ClpC protease or to other proteins involved in proteolysis. The sequence is that of Adapter protein MecA from Lacticaseibacillus paracasei (strain ATCC 334 / BCRC 17002 / CCUG 31169 / CIP 107868 / KCTC 3260 / NRRL B-441) (Lactobacillus paracasei).